We begin with the raw amino-acid sequence, 144 residues long: Nucleoside diphosphate kinase (144 aa).

ATP is bound by residues K11, F59, R87, T93, R104, and N114. H117 serves as the catalytic Pros-phosphohistidine intermediate.

The protein belongs to the NDK family. Homotetramer. It depends on Mg(2+) as a cofactor.

It is found in the cytoplasm. The enzyme catalyses a 2'-deoxyribonucleoside 5'-diphosphate + ATP = a 2'-deoxyribonucleoside 5'-triphosphate + ADP. It catalyses the reaction a ribonucleoside 5'-diphosphate + ATP = a ribonucleoside 5'-triphosphate + ADP. Its function is as follows. Major role in the synthesis of nucleoside triphosphates other than ATP. The ATP gamma phosphate is transferred to the NDP beta phosphate via a ping-pong mechanism, using a phosphorylated active-site intermediate. In Psychromonas ingrahamii (strain DSM 17664 / CCUG 51855 / 37), this protein is Nucleoside diphosphate kinase.